A 563-amino-acid chain; its full sequence is Glutamate--tRNA ligase (563 aa).

Residues 61 to 94 (PEEQQKEVESLGGLEQHTKKEEKPKGLPELKNTE) form a disordered region. Positions 76 to 94 (QHTKKEEKPKGLPELKNTE) are enriched in basic and acidic residues. The 'HIGH' region motif lies at 104–114 (PNPSGPLHIGH).

The protein belongs to the class-I aminoacyl-tRNA synthetase family. Glutamate--tRNA ligase type 2 subfamily.

It is found in the cytoplasm. The enzyme catalyses tRNA(Glu) + L-glutamate + ATP = L-glutamyl-tRNA(Glu) + AMP + diphosphate. In terms of biological role, catalyzes the attachment of glutamate to tRNA(Glu) in a two-step reaction: glutamate is first activated by ATP to form Glu-AMP and then transferred to the acceptor end of tRNA(Glu). The chain is Glutamate--tRNA ligase from Methanosphaera stadtmanae (strain ATCC 43021 / DSM 3091 / JCM 11832 / MCB-3).